A 414-amino-acid chain; its full sequence is MINLKLLETNYDEFVKKLEGKNVKASLLDELLHTFNELKQKRKALENFQAIQNAKSKELGVKARAGEDVSELKSELNLNKAALADADEIVKQYEEKLEQISFSVPNITDDDVPFGKDENDNVCIKTVLEPTKFDFKPKEHWELGESLGWLDFERGAKLSGSRFTVLRGMGARLGRALVNYMIDFNSARGFELVNVPYLVSSNTLFGTGQLPKFEEDLYKVRDEDLYLIPTSEVPVTNLYNDTIIEAEQLPIKMTCYSACFRQEAGSAGRDTRGMIRQHQFEKVELVSITKPDQSEGVLAEMISCASDLLTSLGLPHRHMLLCSGDLGFSAAKTIDLEVWLPGQGKYREISSISNTRDFQARRAKIRFKDGKKNMLVNTLNGSSLAVGRTLIAIMENYQKADGTIEIPEVLKRYM.

230–232 (TSE) provides a ligand contact to L-serine. Position 261-263 (261-263 (RQE)) interacts with ATP. Glu-284 serves as a coordination point for L-serine. Residue 348–351 (EISS) participates in ATP binding. An L-serine-binding site is contributed by Ser-382.

Belongs to the class-II aminoacyl-tRNA synthetase family. Type-1 seryl-tRNA synthetase subfamily. In terms of assembly, homodimer. The tRNA molecule binds across the dimer.

The protein localises to the cytoplasm. The catalysed reaction is tRNA(Ser) + L-serine + ATP = L-seryl-tRNA(Ser) + AMP + diphosphate + H(+). It catalyses the reaction tRNA(Sec) + L-serine + ATP = L-seryl-tRNA(Sec) + AMP + diphosphate + H(+). Its pathway is aminoacyl-tRNA biosynthesis; selenocysteinyl-tRNA(Sec) biosynthesis; L-seryl-tRNA(Sec) from L-serine and tRNA(Sec): step 1/1. Functionally, catalyzes the attachment of serine to tRNA(Ser). Is also able to aminoacylate tRNA(Sec) with serine, to form the misacylated tRNA L-seryl-tRNA(Sec), which will be further converted into selenocysteinyl-tRNA(Sec). In Campylobacter concisus (strain 13826), this protein is Serine--tRNA ligase.